The sequence spans 249 residues: DNA repair protein RecO (249 aa).

This sequence belongs to the RecO family.

In terms of biological role, involved in DNA repair and RecF pathway recombination. This is DNA repair protein RecO from Rhodopseudomonas palustris (strain BisB5).